The chain runs to 290 residues: Cilia- and flagella-associated protein 298 (290 aa).

Phosphotyrosine is present on Y264.

The protein belongs to the CFAP298 family. Interacts with ZMYND10.

It localises to the cytoplasm. Its subcellular location is the cytoskeleton. The protein localises to the cilium basal body. Functionally, plays a role in motile cilium function, possibly by acting on outer dynein arm assembly. Seems to be important for initiation rather than maintenance of cilium motility. Required for correct positioning of the cilium at the apical cell surface, suggesting an additional role in the planar cell polarity (PCP) pathway. May suppress canonical Wnt signaling activity. The polypeptide is Cilia- and flagella-associated protein 298 (Homo sapiens (Human)).